A 429-amino-acid polypeptide reads, in one-letter code: Cholesterol 7-desaturase nvd (429 aa).

Residues 23-43 traverse the membrane as a helical segment; the sequence is FVICLWTLAVTFIRIYWIFFV. The Rieske domain occupies 98–201; that stretch reads YGILKSSQLK…SQEVDGFIFI (104 aa). Cysteine 138, histidine 140, cysteine 158, and histidine 161 together coordinate [2Fe-2S] cluster.

This sequence belongs to the cholesterol 7-desaturase family. The cofactor is [2Fe-2S] cluster. Expressed predominantly in the prothoracic gland and weakly in brain and malpighian tubules.

The protein localises to the membrane. It catalyses the reaction cholesterol + NADPH + O2 + H(+) = 7-dehydrocholesterol + NADP(+) + 2 H2O. The catalysed reaction is cholesterol + NADH + O2 + H(+) = 7-dehydrocholesterol + NAD(+) + 2 H2O. It functions in the pathway steroid hormone biosynthesis; dafachronic acid biosynthesis. Catalyzes the production of 7-dehydrocholesterol (7-DHC or cholesta-5,7-dien-3beta-ol) by inserting a double bond (desaturating) at the C7-C8 single bond of cholesterol. Essential regulator of steroid biosynthesis, as this reaction is the first step in the synthesis of the steroid hormone Delta(7)-dafachronic acid. Required for insect molting, metamorphosis and body growth throughout development via the regulation of ecdysteroid biosynthesis in the prothoracic gland. This Drosophila melanogaster (Fruit fly) protein is Cholesterol 7-desaturase nvd.